We begin with the raw amino-acid sequence, 293 residues long: 4-hydroxy-tetrahydrodipicolinate synthase (293 aa).

T51 serves as a coordination point for pyruvate. The Proton donor/acceptor role is filled by Y140. K168 (schiff-base intermediate with substrate) is an active-site residue. Residue I209 participates in pyruvate binding.

This sequence belongs to the DapA family. Homotetramer; dimer of dimers.

It is found in the cytoplasm. It catalyses the reaction L-aspartate 4-semialdehyde + pyruvate = (2S,4S)-4-hydroxy-2,3,4,5-tetrahydrodipicolinate + H2O + H(+). It functions in the pathway amino-acid biosynthesis; L-lysine biosynthesis via DAP pathway; (S)-tetrahydrodipicolinate from L-aspartate: step 3/4. Its function is as follows. Catalyzes the condensation of (S)-aspartate-beta-semialdehyde [(S)-ASA] and pyruvate to 4-hydroxy-tetrahydrodipicolinate (HTPA). The sequence is that of 4-hydroxy-tetrahydrodipicolinate synthase from Streptococcus mutans serotype c (strain ATCC 700610 / UA159).